Reading from the N-terminus, the 455-residue chain is Phosphoglucosamine mutase (455 aa).

The active-site Phosphoserine intermediate is serine 108. Serine 108, aspartate 246, aspartate 248, and aspartate 250 together coordinate Mg(2+). Serine 108 carries the post-translational modification Phosphoserine.

This sequence belongs to the phosphohexose mutase family. Requires Mg(2+) as cofactor. Activated by phosphorylation.

The catalysed reaction is alpha-D-glucosamine 1-phosphate = D-glucosamine 6-phosphate. Catalyzes the conversion of glucosamine-6-phosphate to glucosamine-1-phosphate. In Frankia casuarinae (strain DSM 45818 / CECT 9043 / HFP020203 / CcI3), this protein is Phosphoglucosamine mutase.